A 281-amino-acid chain; its full sequence is Hepatitis A virus cellular receptor 2 homolog (281 aa).

The N-terminal stretch at 1-19 is a signal peptide; it reads MFSGLTLNCVLLLLQLLLA. The Ig-like V-type domain maps to 20 to 125; the sequence is RSLENAYVFE…PGLMNDKKLE (106 aa). The Extracellular segment spans residues 20–193; it reads RSLENAYVFE…KDSGETIRTA (174 aa). Cystine bridges form between Cys-38/Cys-111, Cys-52/Cys-63, and Cys-58/Cys-110. A 1,2-diacyl-sn-glycero-3-phospho-L-serine is bound by residues Ser-61 and Gln-62. Residues Asn-74 and Asn-100 are each glycosylated (N-linked (GlcNAc...) asparagine). Arg-112 contacts a 1,2-diacyl-sn-glycero-3-phospho-L-serine. Ca(2+)-binding residues include Phe-115 and Gly-117. Residue Met-119 coordinates a 1,2-diacyl-sn-glycero-3-phospho-L-serine. Asn-120 is a Ca(2+) binding site. The interval 139–160 is disordered; it reads QTAHGDSTTASPRTLTTERNGS. O-linked (GalNAc...) threonine glycosylation occurs at Thr-146. A glycan (N-linked (GlcNAc...) asparagine) is linked at Asn-172. A helical transmembrane segment spans residues 194-214; sequence IHIGVGVSAGLTLALIIGVLI. The Cytoplasmic segment spans residues 215–281; the sequence is LKWYSCKKKK…YCYVNSQQPS (67 aa). Residues 252–270 form an interaction with BAG6 region; it reads EENIYTIEENVYEVENSNE. Position 256 is a phosphotyrosine; by ITK (Tyr-256).

This sequence belongs to the immunoglobulin superfamily. TIM family. As to quaternary structure, interacts with HMGB1; impairs HMGB1 binding to B-DNA and likely HMGB1-mediated innate immune response. Interacts with BAG6. Interacts (phosphorylated) with PIK3R1 and PIK3R2. Interacts (not dependent on its phosphorylation status) with FYN. Interacts (in basal state T-cells) with VAV1; AKT1/2, LCP2, ZAP70, SYK, PIK3R1, FYN, SH3BP2 and SH2D2A. Interacts (in activated T-cells) with LCK and PLCG. Interacts with ILF3; this interaction promotes ILF3 ubiquitination and degradation. Phosphorylated on tyrosine residues; modestly increased after TCR/CD28 stimulation. Can be phosphorylated in the cytoplasmic domain by FYN. Phosphorylation at Tyr-256 is increased by stimulation with ligand LGALS9. In terms of processing, N-glycosylated. Expressed in T-helper type 1 lymphocytes. Not expressed by naive T-cells but up-regulated as they differentiate into T-helper-1 cells. Also expressed by differentiated type 1 CD8+ cytotoxic T-cells. Expressed on peritoneal exudate macrophages, monocytes, and splenic dendritic cells (DCs). Expression on natural killer (NK) cells is inversely associated with IFN-gamma production during the initial 24 hours of LPS-induced endotoxic shock. Expressed on mast cells.

It localises to the membrane. Its subcellular location is the cell junction. It is found in the secreted. Its function is as follows. Cell surface receptor implicated in modulating innate and adaptive immune responses. Generally accepted to have an inhibiting function. Reports on stimulating functions suggest that the activity may be influenced by the cellular context and/or the respective ligand. Regulates macrophage activation. Inhibits T-helper type 1 lymphocyte (Th1)-mediated auto- and alloimmune responses and promotes immunological tolerance. In CD8+ cells attenuates TCR-induced signaling, specifically by blocking NF-kappaB and NFAT promoter activities resulting in the loss of IL-2 secretion. The function may implicate its association with LCK proposed to impair phosphorylation of TCR subunits. In contrast, shown to activate TCR-induced signaling in T-cells probably implicating ZAP70, LCP2, LCK and FYN. Expressed on Treg cells can inhibit Th17 cell responses. Receptor for LGALS9. Binding to LGALS9 is believed to result in suppression of T-cell responses; the resulting apoptosis of antigen-specific cells may implicate HAVCR2 phosphorylation and disruption of its association with BAG6. Binding to LGALS9 is proposed to be involved in innate immune response to intracellular pathogens. Expressed on Th1 cells interacts with LGALS9 expressed on Mycobacterium tuberculosis-infected macrophages to stimulate antibactericidal activity including IL-1 beta secretion and to restrict intracellular bacterial growth. However, the function as receptor for LGALS9 has been challenged. Also reported to enhance CD8+ T-cell responses to an acute infection such as by Listeria monocytogenes. Receptor for phosphatidylserine (PtSer); PtSer-binding is calcium-dependent. May recognize PtSer on apoptotic cells leading to their phagocytosis. Mediates the engulfment of apoptotic cells by dendritic cells. Expressed on T-cells, promotes conjugation but not engulfment of apoptotic cells. Expressed on dendritic cells (DCs) positively regulates innate immune response and in synergy with Toll-like receptors promotes secretion of TNF-alpha. In tumor-imfiltrating DCs suppresses nucleic acid-mediated innate immune repsonse by interaction with HMGB1 and interfering with nucleic acid-sensing and trafficking of nucleid acids to endosomes. Can enhance mast cell production of Th2 cytokines Il-4, IL-6 and IL-13. Expressed on natural killer (NK) cells acts as a coreceptor to enhance IFN-gamma production in response to LGALS9. In contrast, shown to suppress NK cell-mediated cytotoxicity. Negatively regulates NK cell function in LPS-induced endotoxic shock. This is Hepatitis A virus cellular receptor 2 homolog (Havcr2) from Mus musculus (Mouse).